Reading from the N-terminus, the 387-residue chain is Sulfopyruvate decarboxylase (387 aa).

Belongs to the TPP enzyme family. Thiamine diphosphate serves as cofactor.

It catalyses the reaction 3-sulfopyruvate + H(+) = sulfoacetaldehyde + CO2. Its pathway is cofactor biosynthesis; coenzyme M biosynthesis. Functionally, involved in the biosynthesis of the coenzyme M (2-mercaptoethanesulfonic acid). Catalyzes the decarboxylation of sulfopyruvate to sulfoacetaldehyde. Is not able to decarboxylate the analogous compounds 2-oxoglutarate or 2-oxosuberate. The sequence is that of Sulfopyruvate decarboxylase from Methanosarcina acetivorans (strain ATCC 35395 / DSM 2834 / JCM 12185 / C2A).